The following is a 444-amino-acid chain: E1B 55 kDa protein (444 aa).

A disordered region spans residues 1–42; sequence MEQDSDLESGRATNQRPPRVRVRGAGVRGRGRVRRRALSEGQ. Phosphoserine is present on residues Ser438 and Ser439.

It belongs to the adenoviridae E1B 55 kDa protein family. As to quaternary structure, interacts with host PML-4 and PML-5; this interaction promotes efficient subnuclear targeting of E1B-55K to PML nuclear bodies. Interacts with E4-ORF3 protein. Interacts with E4-ORF6 protein.

The protein resides in the host nucleus. It is found in the host cytoplasm. In terms of biological role, plays a major role to prevent cellular inhibition of viral genome replication. Assembles an SCF-like E3 ubiquitin ligase complex based on the cellular proteins ELOB, ELOC, CUL5 and RBX1, in cooperation with viral E4orf6. This viral RING-type ligase ubiquitinates cellular substrates and targets them to proteasomal degradation: TP53/p53, LIG4, MRE11-RAD50-NBS1 (MRN) complex, ITGA3, DAXX and BLM. E1B-55K probably acts as the substrate-specific adapter of the SCF-like E3 ubiquitin ligase complex. Degradation of host TP53/p53 activity is essential for preventing E1A-induced TP53 accumulation that would otherwise lead to cell apoptosis and growth arrest. E1B-55K also inactivates TP53 transcription-factor activity by binding its transactivation domain. E1B-55K also functions as a SUMO1 E3 ligase for TP53 which causes the latter to be sequestered in promyelocytic leukemia (PML) nuclear bodies thereby contributing to maximal inhibition of TP53 function. This is E1B 55 kDa protein from Canis lupus familiaris (Dog).